The primary structure comprises 196 residues: Kunitz trypsin inhibitor 5 (196 aa).

The signal sequence occupies residues 1–19 (MSSLLYIFLLLAVFISHRG). Cysteine 156 and cysteine 167 form a disulfide bridge.

Belongs to the protease inhibitor I3 (leguminous Kunitz-type inhibitor) family.

The protein localises to the endoplasmic reticulum. In terms of biological role, can inhibit both serine proteases and cysteine proteases. May be involved in the modulation of the proteases that participate in the hydrolysis of dietary proteins in the gut of spider mites. The sequence is that of Kunitz trypsin inhibitor 5 from Arabidopsis thaliana (Mouse-ear cress).